An 81-amino-acid polypeptide reads, in one-letter code: Photosystem I iron-sulfur center (81 aa).

2 4Fe-4S ferredoxin-type domains span residues 2–31 (AHIV…MVPW) and 39–68 (MASA…VRVY). Positions 11, 14, 17, 21, 48, 51, 54, and 58 each coordinate [4Fe-4S] cluster.

The eukaryotic PSI reaction center is composed of at least 11 subunits. Requires [4Fe-4S] cluster as cofactor.

The protein resides in the plastid. Its subcellular location is the chloroplast thylakoid membrane. The catalysed reaction is reduced [plastocyanin] + hnu + oxidized [2Fe-2S]-[ferredoxin] = oxidized [plastocyanin] + reduced [2Fe-2S]-[ferredoxin]. Its function is as follows. Apoprotein for the two 4Fe-4S centers FA and FB of photosystem I (PSI); essential for photochemical activity. FB is the terminal electron acceptor of PSI, donating electrons to ferredoxin. The C-terminus interacts with PsaA/B/D and helps assemble the protein into the PSI complex. Required for binding of PsaD and PsaE to PSI. PSI is a plastocyanin/cytochrome c6-ferredoxin oxidoreductase, converting photonic excitation into a charge separation, which transfers an electron from the donor P700 chlorophyll pair to the spectroscopically characterized acceptors A0, A1, FX, FA and FB in turn. The protein is Photosystem I iron-sulfur center of Chlamydomonas reinhardtii (Chlamydomonas smithii).